A 667-amino-acid chain; its full sequence is WD40 repeat-containing protein DDB_G0271002 (667 aa).

WD repeat units lie at residues 165–204 (NHGVSTWGIAICPSKPLIAVSSNSHKITIWNLDDENPQET) and 210–249 (KHKHNIPSIDFSPCGNYLVSVSIDKNIRIWDVNKRQLLRI). Residues 278–293 (SSNSRDNNNNNSNSNN) show a composition bias toward low complexity. Disordered stretches follow at residues 278–301 (SSNSRDNNNNNSNSNNNGGGGIII), 316–345 (LVENNQEVEPMPEEEEEEEEEEVNQVDNDD), and 389–440 (DIIF…ATTT). Residues 325–345 (PMPEEEEEEEEEEVNQVDNDD) are compositionally biased toward acidic residues. Residues 400 to 410 (NQHQQQQQQNQ) show a composition bias toward low complexity. A compositionally biased stretch (acidic residues) spans 411 to 428 (EIEEEGQEGQEEQEDGTE). Low complexity predominate over residues 429 to 440 (NENNQGTIATTT).

This Dictyostelium discoideum (Social amoeba) protein is WD40 repeat-containing protein DDB_G0271002.